Reading from the N-terminus, the 763-residue chain is Phosphoglycerol transferase I (763 aa).

Helical transmembrane passes span M1–A21, W26–F46, I77–I97, and F108–F128.

The protein belongs to the OpgB family.

The protein resides in the cell inner membrane. The catalysed reaction is a phosphatidylglycerol + a membrane-derived-oligosaccharide D-glucose = a 1,2-diacyl-sn-glycerol + a membrane-derived-oligosaccharide 6-(glycerophospho)-D-glucose.. It functions in the pathway glycan metabolism; osmoregulated periplasmic glucan (OPG) biosynthesis. Its function is as follows. Transfers a phosphoglycerol residue from phosphatidylglycerol to the membrane-bound nascent glucan backbones. The chain is Phosphoglycerol transferase I from Escherichia coli O6:K15:H31 (strain 536 / UPEC).